Here is a 138-residue protein sequence, read N- to C-terminus: Large ribosomal subunit protein eL32 (138 aa).

It belongs to the eukaryotic ribosomal protein eL32 family.

The sequence is that of Large ribosomal subunit protein eL32 (rpl32e) from Saccharolobus solfataricus (strain ATCC 35092 / DSM 1617 / JCM 11322 / P2) (Sulfolobus solfataricus).